A 422-amino-acid polypeptide reads, in one-letter code: UDP-N-acetylglucosamine 1-carboxyvinyltransferase (422 aa).

A phosphoenolpyruvate-binding site is contributed by 22 to 23; sequence KN. Residue arginine 93 participates in UDP-N-acetyl-alpha-D-glucosamine binding. Cysteine 117 (proton donor) is an active-site residue. Position 117 is a 2-(S-cysteinyl)pyruvic acid O-phosphothioketal (cysteine 117). UDP-N-acetyl-alpha-D-glucosamine-binding positions include 122 to 126, aspartate 305, and isoleucine 327; that span reads RPVDQ.

This sequence belongs to the EPSP synthase family. MurA subfamily.

It is found in the cytoplasm. It carries out the reaction phosphoenolpyruvate + UDP-N-acetyl-alpha-D-glucosamine = UDP-N-acetyl-3-O-(1-carboxyvinyl)-alpha-D-glucosamine + phosphate. It functions in the pathway cell wall biogenesis; peptidoglycan biosynthesis. Cell wall formation. Adds enolpyruvyl to UDP-N-acetylglucosamine. The polypeptide is UDP-N-acetylglucosamine 1-carboxyvinyltransferase (Bordetella petrii (strain ATCC BAA-461 / DSM 12804 / CCUG 43448)).